A 782-amino-acid chain; its full sequence is MRQKTLDVLEFEKIKSLVANETISDLGLEKVNQMMPATNFETVVFQMEETDEIAQIYNKHRLPSLSGLSKVSAFIHRADIGGVLNVSELNLIKRLIQVQNQFKTFYNQLVEEDEGVKYPILDDKMNQLPVLTDLFQQINETCDTYDLYDNASYELQGIRSKISSTNQRIRQNLDRIVKSQANQKKLSDAIVTVRNERNVIPVKAEYRQDFNGIVHDQSASGQTLYIEPSSVVEMNNQISRLRHDEAIEKERILTQLTGYVAADKDALLVAEQVMGQLDFLIAKARYSRSIKGTKPIFKEDRTVYLPKAYHPLLNRETVVANTIEFMEDIETVIITGPNTGGKTVTLKTLGLIIVMAQSGLLIPTLDGSQLSVFKNVYCDIGDEQSIEQSLSTFSSHMTNIVEILKHADKHSLVLFDELGAGTDPSEGAALAMSILDHVRKIGSLVMATTHYPELKAYSYNREGVMNASVEFDVDTLSPTYKLLMGVPGRSNAFDISKKLGLSLNIINKAKTMIGTDEKEINEMIESLERNYKRVETQRLELDRLVKEAEQVHDDLSKQYQQFQNYEKSLIEEAKEKANQKIKAATKEADDIIKDLRQLREQKGADVKEHELIDKKKRLDDHYEAKSIKQNVQKQKYDKIVAGDEVKVLSYGQKGEVLEIVNDEEAIVQMGIIKMKLPIEDLEKKQKEKVKPTKMVTRQNRQTIKTELDLRGYRYEDALIELDQYLDQAVLSNYEQVYIIHGKGTGALQKGVQQHLKKHKSVSDFRGGMPSEGGFGVTVATLK.

An ATP-binding site is contributed by 336–343 (GPNTGGKT). A Smr domain is found at 707 to 782 (LDLRGYRYED…GFGVTVATLK (76 aa)).

This sequence belongs to the DNA mismatch repair MutS family. MutS2 subfamily. Homodimer. Binds to stalled ribosomes, contacting rRNA.

In terms of biological role, endonuclease that is involved in the suppression of homologous recombination and thus may have a key role in the control of bacterial genetic diversity. Its function is as follows. Acts as a ribosome collision sensor, splitting the ribosome into its 2 subunits. Detects stalled/collided 70S ribosomes which it binds and splits by an ATP-hydrolysis driven conformational change. Acts upstream of the ribosome quality control system (RQC), a ribosome-associated complex that mediates the extraction of incompletely synthesized nascent chains from stalled ribosomes and their subsequent degradation. Probably generates substrates for RQC. This chain is Endonuclease MutS2, found in Staphylococcus aureus (strain COL).